A 64-amino-acid chain; its full sequence is UPF0370 protein YPA_2246 (64 aa).

The helical transmembrane segment at 3–23 (WLADYWWIILILLVGMILNGI) threads the bilayer. Residues 36 to 47 (DNKPELPPHRDN) show a composition bias toward basic and acidic residues. Residues 36–64 (DNKPELPPHRDNNAQWDDEDDWPDQNKKK) are disordered.

It belongs to the UPF0370 family.

It is found in the cell membrane. In Yersinia pestis bv. Antiqua (strain Antiqua), this protein is UPF0370 protein YPA_2246.